A 305-amino-acid polypeptide reads, in one-letter code: rRNA 2'-O-methyltransferase fibrillarin (305 aa).

A disordered region spans residues 1–70 (MAYTPGSRGG…SGGRGGAKGG (70 aa)). The segment covering 7-69 (SRGGRGGSRG…SSGGRGGAKG (63 aa)) has biased composition (gly residues). Residues Ser111 and Ser114 each carry the phosphoserine modification. Residues 160–161 (TS), 179–180 (EF), 204–205 (DA), and 224–227 (DVAQ) contribute to the S-adenosyl-L-methionine site.

Belongs to the methyltransferase superfamily. Fibrillarin family. In terms of assembly, component of box C/D small nucleolar ribonucleoprotein (snoRNP) particles. In terms of processing, by homology to other fibrillarins, some or all of the N-terminal domain arginines are modified to asymmetric dimethylarginine (DMA).

It is found in the nucleus. The protein resides in the nucleolus. It carries out the reaction L-glutaminyl-[histone H2A] + S-adenosyl-L-methionine = N(5)-methyl-L-glutaminyl-[histone H2A] + S-adenosyl-L-homocysteine + H(+). Functionally, S-adenosyl-L-methionine-dependent methyltransferase that has the ability to methylate both RNAs and proteins. Involved in pre-rRNA processing by catalyzing the site-specific 2'-hydroxyl methylation of ribose moieties in pre-ribosomal RNA. Site specificity is provided by a guide RNA that base pairs with the substrate. Methylation occurs at a characteristic distance from the sequence involved in base pairing with the guide RNA. Also acts as a protein methyltransferase by mediating methylation of 'Gln-105' of histone H2A (H2AQ105me), a modification that impairs binding of the FACT complex and is specifically present at 35S ribosomal DNA locus. The sequence is that of rRNA 2'-O-methyltransferase fibrillarin (fib1) from Schizosaccharomyces pombe (strain 972 / ATCC 24843) (Fission yeast).